A 244-amino-acid chain; its full sequence is 1-(5-phosphoribosyl)-5-[(5-phosphoribosylamino)methylideneamino] imidazole-4-carboxamide isomerase (244 aa).

Residue Asp10 is the Proton acceptor of the active site. Asp132 functions as the Proton donor in the catalytic mechanism.

Belongs to the HisA/HisF family.

Its subcellular location is the cytoplasm. It catalyses the reaction 1-(5-phospho-beta-D-ribosyl)-5-[(5-phospho-beta-D-ribosylamino)methylideneamino]imidazole-4-carboxamide = 5-[(5-phospho-1-deoxy-D-ribulos-1-ylimino)methylamino]-1-(5-phospho-beta-D-ribosyl)imidazole-4-carboxamide. Its pathway is amino-acid biosynthesis; L-histidine biosynthesis; L-histidine from 5-phospho-alpha-D-ribose 1-diphosphate: step 4/9. The chain is 1-(5-phosphoribosyl)-5-[(5-phosphoribosylamino)methylideneamino] imidazole-4-carboxamide isomerase from Stenotrophomonas maltophilia (strain K279a).